Reading from the N-terminus, the 322-residue chain is tRNA-specific adenosine deaminase subunit TAD3 (322 aa).

One can recognise a CMP/dCMP-type deaminase domain in the interval Glu-162–Leu-283. The Zn(2+) site is built by His-216, Cys-254, Cys-257, and Cys-322.

This sequence belongs to the cytidine and deoxycytidylate deaminase family. ADAT3 subfamily. In terms of assembly, heterodimer with TAD2.

The protein resides in the cytoplasm. It is found in the nucleus. Its subcellular location is the peroxisome. Its function is as follows. Structural subunit of tRNA-specific adenosine deaminase, which deaminates adenosine-34 (the first, also called wobble position of the anticodon) to inosine in many tRNAs. Inosine-34 allows the decoding of 3 different nucleotides at the third position of mRNA codons, as inosine is able to pair with U, C, and A. This is tRNA-specific adenosine deaminase subunit TAD3 (TAD3) from Saccharomyces cerevisiae (strain ATCC 204508 / S288c) (Baker's yeast).